We begin with the raw amino-acid sequence, 211 residues long: Claudin-7 (211 aa).

Residues methionine 1–glutamine 7 lie on the Cytoplasmic side of the membrane. The chain crosses the membrane as a helical span at residues leucine 8–proline 28. At glutamine 29–arginine 81 the chain is on the extracellular side. The chain crosses the membrane as a helical span at residues alanine 82–methionine 102. The Cytoplasmic segment spans residues lysine 103–alanine 119. A helical membrane pass occupies residues methionine 120–isoleucine 140. The Extracellular portion of the chain corresponds to glycine 141–glutamate 160. Residues phenylalanine 161–leucine 181 form a helical membrane-spanning segment. Over leucine 182–valine 211 the chain is Cytoplasmic. The interval tyrosine 210–valine 211 is interactions with TJP1, TJP2 and TJP3.

This sequence belongs to the claudin family. As to quaternary structure, directly interacts with TJP1/ZO-1, TJP2/ZO-2 and TJP3/ZO-3. The phosphorylated form interacts with EPCAM. In terms of processing, phosphorylated.

The protein localises to the cell membrane. The protein resides in the basolateral cell membrane. It localises to the cell junction. Its subcellular location is the tight junction. Functionally, plays a major role in tight junction-specific obliteration of the intercellular space. This chain is Claudin-7 (Cldn7), found in Rattus norvegicus (Rat).